A 329-amino-acid chain; its full sequence is CDP-6-deoxy-L-threo-D-glycero-4-hexulose-3-dehydrase reductase (329 aa).

The region spanning 2–93 (SLNVKLHPSG…ELDVNYYPEL (92 aa)) is the 2Fe-2S ferredoxin-type domain. [2Fe-2S] cluster is bound by residues cysteine 37, cysteine 42, cysteine 45, and cysteine 75. The 100-residue stretch at 98–197 (KKTYPCKLDS…EGPQGTFFVR (100 aa)) folds into the FAD-binding FR-type domain.

In terms of assembly, monomer.

The protein operates within nucleotide-sugar biosynthesis; CDP-ascarylose biosynthesis. It functions in the pathway bacterial outer membrane biogenesis; lipopolysaccharide biosynthesis. Its function is as follows. Participates in the conversion of CDP-6-deoxy-D-glycero-L-threo-4-hexulose to 3,6-dideoxy-D-glycero-D-glycero-4-hexulose together with CDP-6-deoxy-D-glycero-L-threo-4-hexulose-3-dehydrase (E1) in two consecutive steps. The detailed mechanism of E3 is not yet resolved. This Yersinia pseudotuberculosis serotype I (strain IP32953) protein is CDP-6-deoxy-L-threo-D-glycero-4-hexulose-3-dehydrase reductase (ascD).